Reading from the N-terminus, the 109-residue chain is Cell division protein ZapA (109 aa).

Residues 21–99 are a coiled coil; the sequence is PEQQEALNQA…IEQALLEQGK (79 aa).

It belongs to the ZapA family. Type 1 subfamily. As to quaternary structure, homodimer. Interacts with FtsZ.

The protein localises to the cytoplasm. Functionally, activator of cell division through the inhibition of FtsZ GTPase activity, therefore promoting FtsZ assembly into bundles of protofilaments necessary for the formation of the division Z ring. It is recruited early at mid-cell but it is not essential for cell division. This chain is Cell division protein ZapA, found in Pectobacterium atrosepticum (strain SCRI 1043 / ATCC BAA-672) (Erwinia carotovora subsp. atroseptica).